The following is an 88-amino-acid chain: Small ribosomal subunit protein uS15c (88 aa).

It belongs to the universal ribosomal protein uS15 family. Part of the 30S ribosomal subunit.

Its subcellular location is the plastid. It is found in the chloroplast. This Draba nemorosa (Woodland whitlowgrass) protein is Small ribosomal subunit protein uS15c (rps15).